Here is a 296-residue protein sequence, read N- to C-terminus: MRLLTCLINVLAGLTLFSQFQRAFGLTITRRGFKVQESDEEPFCALHHPNTGEYFDLSGLIRDNTSEKGDYSVNGYDFGTNFSINLCHPVVSNLTNYTVEGDVSSEDSIGGFFTVEDDDLYSIGQAAYKPYFRGKKLIMQLDNGSLCPKSNHIRMSTLISFTCNRDPYTAPSVITYVGNLNDCAFFFEWKTIHACPTVKKDSTLNPVSVFLLFCAIAFLAYFVGGFVYQRVVLNARGLRQIPNYEMWRSLFGFISDIVIILYSSILSILPSSITRMRGNRRNIDYVEDALIDDIDT.

The first 25 residues, 1–25, serve as a signal peptide directing secretion; it reads MRLLTCLINVLAGLTLFSQFQRAFG. Topologically, residues 26-206 are lumenal; it reads LTITRRGFKV…TVKKDSTLNP (181 aa). The region spanning 42–197 is the MRH domain; that stretch reads PFCALHHPNT…EWKTIHACPT (156 aa). A disulfide bond links Cys44 and Cys87. Residues Asn64, Asn81, Asn93, Asn96, and Asn143 are each glycosylated (N-linked (GlcNAc...) asparagine). 2 disulfides stabilise this stretch: Cys147–Cys183 and Cys163–Cys195. Residues 207–227 traverse the membrane as a helical segment; sequence VSVFLLFCAIAFLAYFVGGFV. At 228-249 the chain is on the cytoplasmic side; sequence YQRVVLNARGLRQIPNYEMWRS. The helical transmembrane segment at 250–270 threads the bilayer; the sequence is LFGFISDIVIILYSSILSILP. The Lumenal portion of the chain corresponds to 271-296; that stretch reads SSITRMRGNRRNIDYVEDALIDDIDT.

This sequence belongs to the MRL1/IGF2R family.

Its subcellular location is the golgi apparatus. It localises to the trans-Golgi network membrane. It is found in the endosome membrane. The polypeptide is Putative mannose 6-phosphate receptor-like protein C530.09c (Schizosaccharomyces pombe (strain 972 / ATCC 24843) (Fission yeast)).